The sequence spans 231 residues: Small ribosomal subunit protein uS3 (231 aa).

One can recognise a KH type-2 domain in the interval 39 to 107; it reads IRKHIMKAIP…DVSLNIVEIR (69 aa).

This sequence belongs to the universal ribosomal protein uS3 family. In terms of assembly, part of the 30S ribosomal subunit. Forms a tight complex with proteins S10 and S14.

Its function is as follows. Binds the lower part of the 30S subunit head. Binds mRNA in the 70S ribosome, positioning it for translation. This chain is Small ribosomal subunit protein uS3, found in Rhizorhabdus wittichii (strain DSM 6014 / CCUG 31198 / JCM 15750 / NBRC 105917 / EY 4224 / RW1) (Sphingomonas wittichii).